The sequence spans 207 residues: SPRY domain-containing protein 4 (207 aa).

The B30.2/SPRY domain occupies 12 to 206 (CRWGAKRLGV…THSGLEVPEG (195 aa)). 2 positions are modified to N6-acetyllysine: K53 and K130. K139 is modified (N6-succinyllysine).

The protein is SPRY domain-containing protein 4 (SPRYD4) of Homo sapiens (Human).